The following is a 302-amino-acid chain: tRNA dimethylallyltransferase 1 (302 aa).

Residue glycine 6–threonine 13 coordinates ATP. Threonine 8–threonine 13 is a binding site for substrate. Interaction with substrate tRNA regions lie at residues aspartate 31–glutamine 34 and glutamine 154–arginine 158.

This sequence belongs to the IPP transferase family. Monomer. Mg(2+) is required as a cofactor.

It catalyses the reaction adenosine(37) in tRNA + dimethylallyl diphosphate = N(6)-dimethylallyladenosine(37) in tRNA + diphosphate. Its function is as follows. Catalyzes the transfer of a dimethylallyl group onto the adenine at position 37 in tRNAs that read codons beginning with uridine, leading to the formation of N6-(dimethylallyl)adenosine (i(6)A). The protein is tRNA dimethylallyltransferase 1 of Porphyromonas gingivalis (strain ATCC 33277 / DSM 20709 / CIP 103683 / JCM 12257 / NCTC 11834 / 2561).